Consider the following 298-residue polypeptide: Ethanolamine ammonia-lyase small subunit (298 aa).

Val-210, Glu-231, and Cys-261 together coordinate adenosylcob(III)alamin.

This sequence belongs to the EutC family. The basic unit is a heterodimer which dimerizes to form tetramers. The heterotetramers trimerize; 6 large subunits form a core ring with 6 small subunits projecting outwards. It depends on adenosylcob(III)alamin as a cofactor.

The protein resides in the bacterial microcompartment. It carries out the reaction ethanolamine = acetaldehyde + NH4(+). It functions in the pathway amine and polyamine degradation; ethanolamine degradation. In terms of biological role, catalyzes the deamination of various vicinal amino-alcohols to oxo compounds. Allows this organism to utilize ethanolamine as the sole source of nitrogen and carbon in the presence of external vitamin B12. This is Ethanolamine ammonia-lyase small subunit from Salmonella schwarzengrund (strain CVM19633).